Reading from the N-terminus, the 320-residue chain is Cytochrome f (320 aa).

Positions 1–35 are cleaved as a signal peptide; sequence MQTRNAFSWIKKEITRSISVLLMIYIITRAPISNA. The heme site is built by Y36, C56, C59, and H60. Residues 286–305 form a helical membrane-spanning segment; that stretch reads VQGLLLFLASIILAQILLVL.

The protein belongs to the cytochrome f family. The 4 large subunits of the cytochrome b6-f complex are cytochrome b6, subunit IV (17 kDa polypeptide, petD), cytochrome f and the Rieske protein, while the 4 small subunits are PetG, PetL, PetM and PetN. The complex functions as a dimer. The cofactor is heme.

The protein localises to the plastid. It localises to the chloroplast thylakoid membrane. Its function is as follows. Component of the cytochrome b6-f complex, which mediates electron transfer between photosystem II (PSII) and photosystem I (PSI), cyclic electron flow around PSI, and state transitions. This is Cytochrome f (petA) from Pisum sativum (Garden pea).